The chain runs to 382 residues: UDP-4-amino-4-deoxy-L-arabinose--oxoglutarate aminotransferase (382 aa).

N6-(pyridoxal phosphate)lysine is present on K183.

The protein belongs to the DegT/DnrJ/EryC1 family. ArnB subfamily. Homodimer. Pyridoxal 5'-phosphate serves as cofactor.

It catalyses the reaction UDP-4-amino-4-deoxy-beta-L-arabinose + 2-oxoglutarate = UDP-beta-L-threo-pentopyranos-4-ulose + L-glutamate. The protein operates within nucleotide-sugar biosynthesis; UDP-4-deoxy-4-formamido-beta-L-arabinose biosynthesis; UDP-4-deoxy-4-formamido-beta-L-arabinose from UDP-alpha-D-glucuronate: step 2/3. Its pathway is bacterial outer membrane biogenesis; lipopolysaccharide biosynthesis. Functionally, catalyzes the conversion of UDP-4-keto-arabinose (UDP-Ara4O) to UDP-4-amino-4-deoxy-L-arabinose (UDP-L-Ara4N). The modified arabinose is attached to lipid A and is required for resistance to polymyxin and cationic antimicrobial peptides. This is UDP-4-amino-4-deoxy-L-arabinose--oxoglutarate aminotransferase from Pseudomonas syringae pv. syringae (strain B728a).